Here is a 627-residue protein sequence, read N- to C-terminus: MSLAWSAGRAWSRQSYAAPPAAAKTPPSELEARIAAIPIERYRNFCIVAHIDHGKSTLSDRLLEYTGTISASDANKQILDKLDVERERGITVKAQTCTMIHNHEGEDYLLHLVDTPGHVDFRAEVTRSYASCGGALLLVDATQGIQAQTVSNFHLAFAQDLALVPVVNKIDMPAADIPRVLEQMQNSFELDPKDAIMLSAKTGKGVPNVLPAVIERIPHPVGDEKKPLKMLLVDSWYDNFRGVVLLVRLFDGTIKTGDNVISLGTGMKYTVGQVGIQYPHATPTKVLRAGQVGYVYFNPGMKKIQDAKLGDTFTFVGAEDNVEPCPGFEEPKPMVFVAAFPTDQSDYSRLADSINQLVLNDRSVTLQKDFSEALGSGWRLGFLGSLHCSVFQDRLRQEHGKSVILTEPTVPSKIIWPDGSEEVVQNPALFPDVSHPRIRGAQLFEPFVTATITMPEEYLGRVIELCEANRGEQKSLEFFHTTQVILQYEIPAAQLVDDLFGKLKSATKGYATLDYEDSGWRQSHLVKLQLLVNRQPVDAICRVVHSSQVDRLGRQWVTKFKEHVDRQHFEVVIQATAGNRIVARETIKPFRKDVLAKLHAADVSRRRKLLEKQKEGRKRLRASFMSR.

Residues 1-16 (MSLAWSAGRAWSRQSY) constitute a mitochondrion transit peptide. A tr-type G domain is found at 40 to 221 (ERYRNFCIVA…AVIERIPHPV (182 aa)). GTP is bound by residues 49 to 56 (AHIDHGKS), 114 to 118 (DTPGH), and 168 to 171 (NKID).

The protein belongs to the TRAFAC class translation factor GTPase superfamily. Classic translation factor GTPase family. LepA subfamily.

It is found in the mitochondrion inner membrane. The enzyme catalyses GTP + H2O = GDP + phosphate + H(+). In terms of biological role, promotes mitochondrial protein synthesis. May act as a fidelity factor of the translation reaction, by catalyzing a one-codon backward translocation of tRNAs on improperly translocated ribosomes. Binds to mitochondrial ribosomes in a GTP-dependent manner. This Fusarium vanettenii (strain ATCC MYA-4622 / CBS 123669 / FGSC 9596 / NRRL 45880 / 77-13-4) (Fusarium solani subsp. pisi) protein is Translation factor GUF1, mitochondrial.